A 337-amino-acid polypeptide reads, in one-letter code: Nucleoid-associated protein Avin_11450 (337 aa).

The protein belongs to the YejK family.

The protein localises to the cytoplasm. The protein resides in the nucleoid. This chain is Nucleoid-associated protein Avin_11450, found in Azotobacter vinelandii (strain DJ / ATCC BAA-1303).